A 255-amino-acid polypeptide reads, in one-letter code: 5-oxoprolinase subunit A (255 aa).

It belongs to the LamB/PxpA family. Forms a complex composed of PxpA, PxpB and PxpC.

It catalyses the reaction 5-oxo-L-proline + ATP + 2 H2O = L-glutamate + ADP + phosphate + H(+). Its function is as follows. Catalyzes the cleavage of 5-oxoproline to form L-glutamate coupled to the hydrolysis of ATP to ADP and inorganic phosphate. This Nitrobacter winogradskyi (strain ATCC 25391 / DSM 10237 / CIP 104748 / NCIMB 11846 / Nb-255) protein is 5-oxoprolinase subunit A.